The primary structure comprises 590 residues: Laccase-19 (590 aa).

The N-terminal stretch at 1–28 (MEKLSMVTSLLCAITVAVLAVAVVSGEA) is a signal peptide. Plastocyanin-like domains are found at residues 36 to 152 (VVHE…PRDG) and 161 to 315 (KDVP…YAGT). N-linked (GlcNAc...) asparagine glycans are attached at residues Asn-41 and Asn-47. Cu cation contacts are provided by His-86 and His-88. An N-linked (GlcNAc...) asparagine glycan is attached at Asn-120. Cu cation contacts are provided by His-131 and His-133. 6 N-linked (GlcNAc...) asparagine glycosylation sites follow: Asn-205, Asn-344, Asn-378, Asn-397, Asn-434, and Asn-465. One can recognise a Plastocyanin-like 3 domain in the interval 424–566 (DFPIRPPRPF…ATAFIVEDGP (143 aa)). Residues Asn-483, His-486, His-488, His-545, Cys-546, His-547, His-551, and Met-556 each contribute to the Cu cation site. Residues 565–590 (GPTPETSLPPPPPEFKRCGNNGLSQP) form a disordered region.

Belongs to the multicopper oxidase family. Requires Cu cation as cofactor.

It is found in the secreted. The protein localises to the extracellular space. Its subcellular location is the apoplast. The catalysed reaction is 4 hydroquinone + O2 = 4 benzosemiquinone + 2 H2O. Its function is as follows. Lignin degradation and detoxification of lignin-derived products. The polypeptide is Laccase-19 (LAC19) (Oryza sativa subsp. japonica (Rice)).